We begin with the raw amino-acid sequence, 176 residues long: NAD(P)H-quinone oxidoreductase subunit 6, chloroplastic (176 aa).

A run of 5 helical transmembrane segments spans residues 10–30 (FLLVFLGSGLILGSLGVVLLT), 32–52 (PIYSAFSLGLVLVCISLFYIL), 61–81 (AQLLIYVGAINILILFAVMFM), 92–112 (LWTVGDGITSLVCTSILVSLM), and 152–172 (FFLPFELISIILLVALIGAIA).

It belongs to the complex I subunit 6 family. In terms of assembly, NDH is composed of at least 16 different subunits, 5 of which are encoded in the nucleus.

The protein localises to the plastid. It is found in the chloroplast thylakoid membrane. The catalysed reaction is a plastoquinone + NADH + (n+1) H(+)(in) = a plastoquinol + NAD(+) + n H(+)(out). It catalyses the reaction a plastoquinone + NADPH + (n+1) H(+)(in) = a plastoquinol + NADP(+) + n H(+)(out). In terms of biological role, NDH shuttles electrons from NAD(P)H:plastoquinone, via FMN and iron-sulfur (Fe-S) centers, to quinones in the photosynthetic chain and possibly in a chloroplast respiratory chain. The immediate electron acceptor for the enzyme in this species is believed to be plastoquinone. Couples the redox reaction to proton translocation, and thus conserves the redox energy in a proton gradient. This Eucalyptus globulus subsp. globulus (Tasmanian blue gum) protein is NAD(P)H-quinone oxidoreductase subunit 6, chloroplastic (ndhG).